Reading from the N-terminus, the 303-residue chain is 2-dehydropantoate 2-reductase (303 aa).

Residues 7–12 (GCGALG), asparagine 98, and alanine 122 contribute to the NADP(+) site. Asparagine 98 is a substrate binding site. Catalysis depends on lysine 176, which acts as the Proton donor. Positions 180, 184, 194, and 244 each coordinate substrate. Residue glutamate 256 participates in NADP(+) binding.

Belongs to the ketopantoate reductase family. In terms of assembly, monomer.

It localises to the cytoplasm. It carries out the reaction (R)-pantoate + NADP(+) = 2-dehydropantoate + NADPH + H(+). The protein operates within cofactor biosynthesis; (R)-pantothenate biosynthesis; (R)-pantoate from 3-methyl-2-oxobutanoate: step 2/2. Its function is as follows. Catalyzes the NADPH-dependent reduction of ketopantoate into pantoic acid. Has a strong preference for NADPH over NADH as the electron acceptor. Pantoate, ketoisovalerate, oxaloacetate, pyruvate, 3-hydroxypyruvate, alpha-ketoglutarate, alpha-ketobutyrate, and acetaldehyde cannot serve as substrates for reduction. In Salmonella typhimurium (strain LT2 / SGSC1412 / ATCC 700720), this protein is 2-dehydropantoate 2-reductase.